Consider the following 309-residue polypeptide: Probable ABC transporter permease protein y4oQ (309 aa).

The next 7 helical transmembrane spans lie at 25 to 45, 89 to 109, 123 to 143, 174 to 194, 221 to 241, 246 to 266, and 278 to 298; these read VVWFTMPAAAIMLLVLGVPLV, LIYAVVAVSLECALGILFAVL, LMLIPMVITPAVVGIFWKLLY, VIIVDVWQSTPFFTLIILAGL, LPHLVPYIMIAAAFRIIGVMA, IFLLTLGGPGNVTTTLSVYAY, and TTAISWIYVVFVLAISAPLIW. Residues 85–296 enclose the ABC transmembrane type-1 domain; that stretch reads IRVTLIYAVV…VFVLAISAPL (212 aa).

This sequence belongs to the binding-protein-dependent transport system permease family. MalFG subfamily.

The protein resides in the cell inner membrane. Probably part of the binding-protein-dependent transport system y4oPQRS. This system probably transports a sugar-like molecule. Probably responsible for the translocation of the substrate across the membrane. The protein is Probable ABC transporter permease protein y4oQ of Sinorhizobium fredii (strain NBRC 101917 / NGR234).